Reading from the N-terminus, the 495-residue chain is Leucine aminopeptidase 2 (495 aa).

Residues 1–21 form the signal peptide; sequence MKSQLLSLAVAVSTISQGVVG. The region spanning 124–218 is the PA domain; the sequence is PPANKIMAEL…EDGKNLASLV (95 aa). Asparagine 142 and asparagine 235 each carry an N-linked (GlcNAc...) asparagine glycan. 2 residues coordinate Zn(2+): histidine 259 and aspartate 271. The N-linked (GlcNAc...) asparagine glycan is linked to asparagine 272. The active-site Proton acceptor is the glutamate 303. 2 residues coordinate Zn(2+): glutamate 304 and aspartate 332. N-linked (GlcNAc...) asparagine glycosylation occurs at asparagine 352. Zn(2+) is bound at residue histidine 430.

The protein belongs to the peptidase M28 family. M28A subfamily. As to quaternary structure, monomer. The cofactor is Zn(2+).

It is found in the secreted. Extracellular aminopeptidase that releases a wide variety of amino acids from natural peptides and contributes to pathogenicity. The sequence is that of Leucine aminopeptidase 2 (LAP2) from Trichophyton tonsurans (Scalp ringworm fungus).